The chain runs to 336 residues: UDP-3-O-acylglucosamine N-acyltransferase (336 aa).

H236 functions as the Proton acceptor in the catalytic mechanism.

The protein belongs to the transferase hexapeptide repeat family. LpxD subfamily. Homotrimer.

It catalyses the reaction a UDP-3-O-[(3R)-3-hydroxyacyl]-alpha-D-glucosamine + a (3R)-hydroxyacyl-[ACP] = a UDP-2-N,3-O-bis[(3R)-3-hydroxyacyl]-alpha-D-glucosamine + holo-[ACP] + H(+). It functions in the pathway bacterial outer membrane biogenesis; LPS lipid A biosynthesis. Its function is as follows. Catalyzes the N-acylation of UDP-3-O-acylglucosamine using 3-hydroxyacyl-ACP as the acyl donor. Is involved in the biosynthesis of lipid A, a phosphorylated glycolipid that anchors the lipopolysaccharide to the outer membrane of the cell. The chain is UDP-3-O-acylglucosamine N-acyltransferase from Aromatoleum aromaticum (strain DSM 19018 / LMG 30748 / EbN1) (Azoarcus sp. (strain EbN1)).